The sequence spans 244 residues: Ribonuclease HII (244 aa).

One can recognise an RNase H type-2 domain in the interval 23 to 236 (KIILGLDEAG…SKKLLKEFEE (214 aa)). Residues D29, E30, and D130 each contribute to the a divalent metal cation site.

This sequence belongs to the RNase HII family. The cofactor is Mn(2+). It depends on Mg(2+) as a cofactor.

The protein resides in the cytoplasm. The catalysed reaction is Endonucleolytic cleavage to 5'-phosphomonoester.. Its function is as follows. Endonuclease that specifically degrades the RNA of RNA-DNA hybrids. This is Ribonuclease HII from Methanococcus vannielii (strain ATCC 35089 / DSM 1224 / JCM 13029 / OCM 148 / SB).